The sequence spans 93 residues: uncharacterized protein (93 aa).

The signal sequence occupies residues 1-11 (MALMVLMALVG). C12 carries the N-palmitoyl cysteine lipid modification. A lipid anchor (S-diacylglycerol cysteine) is attached at C12.

It is found in the cell membrane. This is an uncharacterized protein from Escherichia coli O6:K15:H31 (strain 536 / UPEC).